The primary structure comprises 104 residues: Cytochrome c6 (104 aa).

An N-terminal signal peptide occupies residues 1 to 20 (MKSLLTFILTTIFCIQQVWA). Cys34, Cys37, His38, and Met78 together coordinate heme c.

The protein belongs to the cytochrome c family. PetJ subfamily. As to quaternary structure, monomer. In terms of processing, binds 1 heme c group covalently per subunit.

It localises to the plastid. The protein localises to the chloroplast thylakoid lumen. Its function is as follows. Functions as an electron carrier between membrane-bound cytochrome b6-f and photosystem I in oxygenic photosynthesis. This Cyanidioschyzon merolae (strain NIES-3377 / 10D) (Unicellular red alga) protein is Cytochrome c6.